Consider the following 475-residue polypeptide: Ribulose bisphosphate carboxylase large chain (475 aa).

Positions 123 and 173 each coordinate substrate. Catalysis depends on K175, which acts as the Proton acceptor. Residue K177 coordinates substrate. Mg(2+) is bound by residues K201, D203, and E204. N6-carboxylysine is present on K201. The active-site Proton acceptor is H294. Substrate-binding residues include R295, H327, and S379.

This sequence belongs to the RuBisCO large chain family. Type I subfamily. In terms of assembly, heterohexadecamer of 8 large chains and 8 small chains. Requires Mg(2+) as cofactor.

It is found in the plastid. It localises to the cyanelle. It catalyses the reaction 2 (2R)-3-phosphoglycerate + 2 H(+) = D-ribulose 1,5-bisphosphate + CO2 + H2O. The catalysed reaction is D-ribulose 1,5-bisphosphate + O2 = 2-phosphoglycolate + (2R)-3-phosphoglycerate + 2 H(+). Its function is as follows. RuBisCO catalyzes two reactions: the carboxylation of D-ribulose 1,5-bisphosphate, the primary event in carbon dioxide fixation, as well as the oxidative fragmentation of the pentose substrate in the photorespiration process. Both reactions occur simultaneously and in competition at the same active site. This is Ribulose bisphosphate carboxylase large chain from Cyanophora paradoxa.